The chain runs to 314 residues: Protein REGULATOR OF FATTY ACID COMPOSITION 3, chloroplastic (314 aa).

The N-terminal 47 residues, 1 to 47 (MESLLHASSSLVSLRPRIDGRDSFINPSRVCLNPSLGRRGSKPLPLV), are a transit peptide targeting the chloroplast. Disordered stretches follow at residues 49–73 (AAKK…ATGP) and 214–314 (AITE…NVGG). Basic and acidic residues predominate over residues 56-69 (KKDDNHNFSARPDE). Composition is skewed to acidic residues over residues 233 to 269 (EYYD…DDDG) and 277 to 294 (GDEE…EQEE). Positions 295-308 (GQDKSTNGRRETRR) are enriched in basic and acidic residues.

This sequence belongs to the bacterial ribosomal protein bS6 family. As to quaternary structure, interacts with CFM3B/SPRT2 in plastids. Expressed ubiquitously in roots, leaves, stems, flower buds, flowers and siliques.

The protein resides in the plastid. It localises to the chloroplast. Its function is as follows. Prevents non-specific action of the splicing factor CFM3b during plastid rRNA biogenesis to improve the accuracy of plastid rRNA processing. Required for plastid functions such as photosynthesis, intracellular distribution, plastid rRNAs biosynthesis and plastid gene expression in roots. Involved in a sucrose-conditional process important for the organization of root lateral and apical meristems (e.g. establishment of RAM from pericycle and symplasmic connectivity), and subsequent primary and lateral roots development. Modulates C18 unsaturated fatty acid metabolism. This chain is Protein REGULATOR OF FATTY ACID COMPOSITION 3, chloroplastic, found in Arabidopsis thaliana (Mouse-ear cress).